The sequence spans 543 residues: Chaperonin GroEL (543 aa).

ATP contacts are provided by residues 29–32 (TLGP), lysine 50, 86–90 (DGTTT), glycine 415, and aspartate 495.

It belongs to the chaperonin (HSP60) family. As to quaternary structure, forms a cylinder of 14 subunits composed of two heptameric rings stacked back-to-back. Interacts with the co-chaperonin GroES.

It is found in the cytoplasm. The catalysed reaction is ATP + H2O + a folded polypeptide = ADP + phosphate + an unfolded polypeptide.. Functionally, together with its co-chaperonin GroES, plays an essential role in assisting protein folding. The GroEL-GroES system forms a nano-cage that allows encapsulation of the non-native substrate proteins and provides a physical environment optimized to promote and accelerate protein folding. In Flavobacterium johnsoniae (strain ATCC 17061 / DSM 2064 / JCM 8514 / BCRC 14874 / CCUG 350202 / NBRC 14942 / NCIMB 11054 / UW101) (Cytophaga johnsonae), this protein is Chaperonin GroEL.